An 83-amino-acid chain; its full sequence is Cell division topological specificity factor (83 aa).

Belongs to the MinE family.

In terms of biological role, prevents the cell division inhibition by proteins MinC and MinD at internal division sites while permitting inhibition at polar sites. This ensures cell division at the proper site by restricting the formation of a division septum at the midpoint of the long axis of the cell. This is Cell division topological specificity factor from Acidithiobacillus ferrooxidans (strain ATCC 23270 / DSM 14882 / CIP 104768 / NCIMB 8455) (Ferrobacillus ferrooxidans (strain ATCC 23270)).